Reading from the N-terminus, the 1010-residue chain is Trifunctional purine biosynthetic protein adenosine-3 (1010 aa).

Position 2 is an N-acetylalanine (alanine 2). Phosphoserine is present on serine 10. In terms of domain architecture, ATP-grasp spans 111–318 (KEFMDRHEIP…LYEVMQSTLD (208 aa)). ATP is bound by residues 190-193 (EEFL), glutamate 197, arginine 220, and asparagine 229. 2 residues coordinate Mg(2+): glutamate 288 and asparagine 290. At lysine 350 the chain carries N6-acetyllysine. Residues 434–809 (GLTYKDSGVD…NFPVQQKKAR (376 aa)) are AIRS domain. Serine 440 and serine 467 each carry phosphoserine. Threonine 682 is subject to Phosphothreonine. A GART domain region spans residues 810-1010 (VAVLISGTGS…DGKIHWAKEQ (201 aa)). Residue 818–820 (GSN) coordinates N(1)-(5-phospho-beta-D-ribosyl)glycinamide. (6R)-10-formyltetrahydrofolate contacts are provided by residues arginine 871, 896-899 (MRIL), and asparagine 913. Histidine 915 (proton donor) is an active-site residue. (6R)-10-formyltetrahydrofolate is bound at residue 947-951 (AEDVD). 977–980 (KVAE) provides a ligand contact to N(1)-(5-phospho-beta-D-ribosyl)glycinamide.

In the N-terminal section; belongs to the GARS family. It in the central section; belongs to the AIR synthase family. This sequence in the C-terminal section; belongs to the GART family. In terms of assembly, homodimer. Mg(2+) is required as a cofactor. It depends on Mn(2+) as a cofactor. As to expression, detected in liver, kidney and brain.

It catalyses the reaction 5-phospho-beta-D-ribosylamine + glycine + ATP = N(1)-(5-phospho-beta-D-ribosyl)glycinamide + ADP + phosphate + H(+). It carries out the reaction 2-formamido-N(1)-(5-O-phospho-beta-D-ribosyl)acetamidine + ATP = 5-amino-1-(5-phospho-beta-D-ribosyl)imidazole + ADP + phosphate + H(+). The enzyme catalyses N(1)-(5-phospho-beta-D-ribosyl)glycinamide + (6R)-10-formyltetrahydrofolate = N(2)-formyl-N(1)-(5-phospho-beta-D-ribosyl)glycinamide + (6S)-5,6,7,8-tetrahydrofolate + H(+). It participates in purine metabolism; IMP biosynthesis via de novo pathway; 5-amino-1-(5-phospho-D-ribosyl)imidazole from N(2)-formyl-N(1)-(5-phospho-D-ribosyl)glycinamide: step 2/2. It functions in the pathway purine metabolism; IMP biosynthesis via de novo pathway; N(1)-(5-phospho-D-ribosyl)glycinamide from 5-phospho-alpha-D-ribose 1-diphosphate: step 2/2. Its pathway is purine metabolism; IMP biosynthesis via de novo pathway; N(2)-formyl-N(1)-(5-phospho-D-ribosyl)glycinamide from N(1)-(5-phospho-D-ribosyl)glycinamide (10-formyl THF route): step 1/1. Its function is as follows. Trifunctional enzyme that catalyzes three distinct reactions as part of the 'de novo' inosine monophosphate biosynthetic pathway. The polypeptide is Trifunctional purine biosynthetic protein adenosine-3 (Gart) (Mus musculus (Mouse)).